The following is a 174-amino-acid chain: Crossover junction endodeoxyribonuclease RuvC (174 aa).

Residues Asp8, Glu68, and Asp140 contribute to the active site. Mg(2+) is bound by residues Asp8, Glu68, and Asp140.

Belongs to the RuvC family. Homodimer which binds Holliday junction (HJ) DNA. The HJ becomes 2-fold symmetrical on binding to RuvC with unstacked arms; it has a different conformation from HJ DNA in complex with RuvA. In the full resolvosome a probable DNA-RuvA(4)-RuvB(12)-RuvC(2) complex forms which resolves the HJ. Mg(2+) serves as cofactor.

Its subcellular location is the cytoplasm. The enzyme catalyses Endonucleolytic cleavage at a junction such as a reciprocal single-stranded crossover between two homologous DNA duplexes (Holliday junction).. In terms of biological role, the RuvA-RuvB-RuvC complex processes Holliday junction (HJ) DNA during genetic recombination and DNA repair. Endonuclease that resolves HJ intermediates. Cleaves cruciform DNA by making single-stranded nicks across the HJ at symmetrical positions within the homologous arms, yielding a 5'-phosphate and a 3'-hydroxyl group; requires a central core of homology in the junction. The consensus cleavage sequence is 5'-(A/T)TT(C/G)-3'. Cleavage occurs on the 3'-side of the TT dinucleotide at the point of strand exchange. HJ branch migration catalyzed by RuvA-RuvB allows RuvC to scan DNA until it finds its consensus sequence, where it cleaves and resolves the cruciform DNA. The polypeptide is Crossover junction endodeoxyribonuclease RuvC (Legionella pneumophila (strain Corby)).